The sequence spans 1077 residues: Bifunctional helicase and thymine dioxygenase JBP2 (1077 aa).

The segment at 1-516 (MPMFMDGASQ…PPLCIPFKIA (516 aa)) is thymine dioxygenase. Residues histidine 391, aspartate 393, and histidine 441 each coordinate Fe cation. Position 455 (arginine 455) interacts with 2-oxoglutarate. The segment at 517-1075 (KTLSLTQHAA…RNIDTVKSER (559 aa)) is DNA Helicase. The 176-residue stretch at 531–706 (SRRIKEGDGC…YRLVGWVDDK (176 aa)) folds into the Helicase ATP-binding domain. 544-551 (LTMGLGKT) contacts ATP. Positions 657–660 (DEGH) match the DEAH box motif. The 162-residue stretch at 871-1032 (KLTALISILH…QVVPGHDLVD (162 aa)) folds into the Helicase C-terminal domain.

The protein in the C-terminal section; belongs to the SNF2/RAD54 helicase family. This sequence in the N-terminal section; belongs to the TET family. JBP2 subfamily. Fe(2+) is required as a cofactor.

The protein localises to the nucleus. It catalyses the reaction ATP + H2O = ADP + phosphate + H(+). It carries out the reaction thymine + 2-oxoglutarate + O2 = 5-hydroxymethyluracil + succinate + CO2. Dioxygenase that catalyzes the first step of DNA base J (beta-d-glucosyl-HOMedU) biosynthesis by converting thymine to 5-hydroxymethyluracil (HOMedU). DNA base J is a hypermodified thymidine residue found in the genome of kinetoplastid parasites, which is localized primarily to repetitive DNA, namely the telomeres, and is implicated in the regulation of antigenic variation. Probably also acts as a DNA helicase. Recognizes and binds specific regions of the genome, hydrolyzes ATP and allows the DNA base J de novo synthesis. Involved in initial synthesis of DNA base J, JBP1 being able to act via the basal level of DNA base J and propagate further synthesis. In contrast to JBP1, it does not specifically bind DNA base J, however it binds chromatin. This chain is Bifunctional helicase and thymine dioxygenase JBP2 (JBP2), found in Trypanosoma brucei brucei (strain 927/4 GUTat10.1).